Here is a 29-residue protein sequence, read N- to C-terminus: NAD-reducing hydrogenase HoxS subunit delta (29 aa).

Residues 1 to 11 are compositionally biased toward basic and acidic residues; that stretch reads MKHSEKNEIAS. Positions 1-29 are disordered; the sequence is MKHSEKNEIASHELPTTPLDPVLAAGRES.

This sequence belongs to the [NiFe]/[NiFeSe] hydrogenase small subunit family. Tetramer of an alpha and a gamma subunits (flavin-containing dimer), and a delta and a nickel-containing beta subunits (hydrogenase dimer). Requires [4Fe-4S] cluster as cofactor. [3Fe-4S] cluster serves as cofactor. The cofactor is [2Fe-2S] cluster. FMN is required as a cofactor. It depends on Ni(2+) as a cofactor.

It is found in the cytoplasm. It catalyses the reaction H2 + NAD(+) = NADH + H(+). The polypeptide is NAD-reducing hydrogenase HoxS subunit delta (hoxY) (Rhodococcus opacus (Nocardia opaca)).